The chain runs to 70 residues: U2-agatoxin-Ao1r (70 aa).

The N-terminal stretch at 1-20 is a signal peptide; it reads MRSIISLILISAMVFSMIAP. A propeptide spanning residues 21–34 is cleaved from the precursor; sequence VPEEERLQLSEDER. 3 disulfide bridges follow: Cys-37/Cys-53, Cys-44/Cys-58, and Cys-52/Cys-68. A Leucine amide modification is found at Leu-69.

The protein belongs to the neurotoxin 01 (U2-agtx) family. In terms of tissue distribution, expressed by the venom gland.

Its subcellular location is the secreted. Insect active toxin causing rapid but reversible paralysis in crickets. No activity shown in mammals. Does not show effect on mammalian voltage-gated calcium channels. This is U2-agatoxin-Ao1r from Agelena orientalis (Funnel-web spider).